Consider the following 629-residue polypeptide: Forkhead box protein O1-B (629 aa).

Disordered regions lie at residues 1-54, 88-134, 211-308, and 359-397; these read MAEP…PEQG, CAHP…SRRN, SWWM…SPFL, and KNNT…QPQV. Residues 36-46 show a composition bias toward polar residues; the sequence is QPGNSNTSSPA. 2 stretches are compositionally biased toward low complexity: residues 90–107 and 115–133; these read HPQQ…THPQ and PASG…SSRR. The segment at residues 136–230 is a DNA-binding region (fork-head); it reads WGNMSYADLI…KSGKSPRRRA (95 aa). The segment covering 240 to 251 has biased composition (basic residues); that stretch reads TKSRGRAAKKKM. 3 stretches are compositionally biased toward polar residues: residues 291–302, 359–377, and 385–397; these read TRASSDASTLSG, KNNT…SPLM, and SYTS…QPQV.

The protein localises to the cytoplasm. It is found in the nucleus. Its function is as follows. Transcription factor that regulates metabolic homeostasis in response to oxidative stress. Binds to the consensus sequence 5'-TT[G/A]TTTTG-3' and the related Daf-16 family binding element (DBE) with consensus sequence 5'-TT[G/A]TTTAC-3'. Main regulator of redox balance and osteoblast numbers and controls bone mass. Orchestrates the endocrine function of the skeleton in regulating glucose metabolism. May act as a positive regulator of apoptosis in cardiac smooth muscle cells as a result of its transcriptional activation of pro-apoptotic genes. The sequence is that of Forkhead box protein O1-B (foxo1b) from Danio rerio (Zebrafish).